Consider the following 226-residue polypeptide: Cytidylate kinase (226 aa).

11 to 19 provides a ligand contact to ATP; that stretch reads GPAGAGKST.

It belongs to the cytidylate kinase family. Type 1 subfamily.

The protein resides in the cytoplasm. The enzyme catalyses CMP + ATP = CDP + ADP. The catalysed reaction is dCMP + ATP = dCDP + ADP. The sequence is that of Cytidylate kinase from Pelotomaculum thermopropionicum (strain DSM 13744 / JCM 10971 / SI).